Consider the following 536-residue polypeptide: Glutamyl-tRNA(Gln) amidotransferase subunit B, mitochondrial (536 aa).

It belongs to the GatB/GatE family. GatB subfamily. As to quaternary structure, subunit of the heterotrimeric GatFAB amidotransferase (AdT) complex, composed of A, B and F subunits.

Its subcellular location is the mitochondrion. The catalysed reaction is L-glutamyl-tRNA(Gln) + L-glutamine + ATP + H2O = L-glutaminyl-tRNA(Gln) + L-glutamate + ADP + phosphate + H(+). Functionally, allows the formation of correctly charged Gln-tRNA(Gln) through the transamidation of misacylated Glu-tRNA(Gln) in the mitochondria. The reaction takes place in the presence of glutamine and ATP through an activated gamma-phospho-Glu-tRNA(Gln). This Vanderwaltozyma polyspora (strain ATCC 22028 / DSM 70294 / BCRC 21397 / CBS 2163 / NBRC 10782 / NRRL Y-8283 / UCD 57-17) (Kluyveromyces polysporus) protein is Glutamyl-tRNA(Gln) amidotransferase subunit B, mitochondrial.